We begin with the raw amino-acid sequence, 306 residues long: Ribonuclease Z (306 aa).

Zn(2+) is bound by residues histidine 63, histidine 65, aspartate 67, histidine 68, histidine 140, aspartate 211, and histidine 269. Aspartate 67 acts as the Proton acceptor in catalysis.

Belongs to the RNase Z family. Homodimer. It depends on Zn(2+) as a cofactor.

It catalyses the reaction Endonucleolytic cleavage of RNA, removing extra 3' nucleotides from tRNA precursor, generating 3' termini of tRNAs. A 3'-hydroxy group is left at the tRNA terminus and a 5'-phosphoryl group is left at the trailer molecule.. Its function is as follows. Zinc phosphodiesterase, which displays some tRNA 3'-processing endonuclease activity. Probably involved in tRNA maturation, by removing a 3'-trailer from precursor tRNA. The sequence is that of Ribonuclease Z from Listeria innocua serovar 6a (strain ATCC BAA-680 / CLIP 11262).